Consider the following 318-residue polypeptide: Aspartate carbamoyltransferase catalytic subunit (318 aa).

Carbamoyl phosphate is bound by residues Arg-58 and Thr-59. Lys-86 serves as a coordination point for L-aspartate. Carbamoyl phosphate-binding residues include Arg-108, His-141, and Gln-144. L-aspartate-binding residues include Arg-174 and Arg-226. Carbamoyl phosphate-binding residues include Gly-270 and Pro-271.

This sequence belongs to the aspartate/ornithine carbamoyltransferase superfamily. ATCase family. Heterododecamer (2C3:3R2) of six catalytic PyrB chains organized as two trimers (C3), and six regulatory PyrI chains organized as three dimers (R2).

The catalysed reaction is carbamoyl phosphate + L-aspartate = N-carbamoyl-L-aspartate + phosphate + H(+). It functions in the pathway pyrimidine metabolism; UMP biosynthesis via de novo pathway; (S)-dihydroorotate from bicarbonate: step 2/3. In terms of biological role, catalyzes the condensation of carbamoyl phosphate and aspartate to form carbamoyl aspartate and inorganic phosphate, the committed step in the de novo pyrimidine nucleotide biosynthesis pathway. The sequence is that of Aspartate carbamoyltransferase catalytic subunit from Lactobacillus gasseri (strain ATCC 33323 / DSM 20243 / BCRC 14619 / CIP 102991 / JCM 1131 / KCTC 3163 / NCIMB 11718 / NCTC 13722 / AM63).